Here is a 1486-residue protein sequence, read N- to C-terminus: Alsin homolog (1486 aa).

3 RCC1 repeats span residues 147-201 (QGVV…MLVA), 256-307 (HTQL…ARTL), and 308-363 (DGRL…LLNA). MORN repeat units lie at residues 744-765 (CGTW…DGSV), 766-784 (YCGE…MVIP), 789-804 (YVGN…HGVY), 817-832 (YEGN…HGVM), 839-853 (YVGE…GYGV), and 863-884 (YMGM…NRGD). One can recognise a VPS9 domain in the interval 1333-1486 (SRKDEMYRQN…VTSRALQKIP (154 aa)).

In the embryo, expressed in a wide range of tissues including the epidermis and the ventral nerve cord.

In terms of biological role, has guanine nucleotide exchange factor (GEF) activity towards Rab5. Promotes the exchange of GDP to GTP, converting inactive GDP-bound Rab5 into its active GTP-bound form. In Drosophila melanogaster (Fruit fly), this protein is Alsin homolog.